The chain runs to 141 residues: Large ribosomal subunit protein uL11 (141 aa).

It belongs to the universal ribosomal protein uL11 family. Part of the ribosomal stalk of the 50S ribosomal subunit. Interacts with L10 and the large rRNA to form the base of the stalk. L10 forms an elongated spine to which L12 dimers bind in a sequential fashion forming a multimeric L10(L12)X complex. One or more lysine residues are methylated.

Forms part of the ribosomal stalk which helps the ribosome interact with GTP-bound translation factors. This is Large ribosomal subunit protein uL11 from Desulfotalea psychrophila (strain LSv54 / DSM 12343).